Consider the following 528-residue polypeptide: MANQDFLNEINKRRTFAIISHPDAGKTTITEKVLLFGNALQKAGTVKGKKSGQHAKSDWMEMEKDRGISITTSVMQFPYGGALVNLLDTPGHEDFSEDTYRTLTAVDSCLMVIDSAKGVEDRTIKLMEVTRLRDTPIVTFMNKLDRDIRDPIDLMDEVENVLNIACAPITWPIGSGKEFKGVYHILRDEVVLYQSGMGHTIQERRVIEGINNPDLDKAIGSYAADLRDEMELVRGASNEFDHAAFLKGELTPVFFGTALGNFGVDHILDGIVEWAPKPLPRESDTRVIMPDEEKFTGFVFKIQANMDPKHRDRVAFMRVCSGRYEQGMKMHHVRIGKDVNVSDALTFMAGDRERAEEAYPGDIIGLHNHGTIRIGDTFTQGEKFRFTGVPNFAPEMFRRIRLRDPLKQKQLLKGLVQLSEEGAVQVFRPLDTNDLIVGAVGVLQFEVVVGRLKSEYNVEAIYEGISVSTARWVYCKDERKLEEFRRKCSQNLALDGGDNLTYIAPTMVNLNLSMERYPDIEFAKTREH.

The tr-type G domain occupies 11-279 (NKRRTFAIIS…GIVEWAPKPL (269 aa)). Residues 20-27 (SHPDAGKT), 88-92 (DTPGH), and 142-145 (NKLD) each bind GTP.

It belongs to the TRAFAC class translation factor GTPase superfamily. Classic translation factor GTPase family. PrfC subfamily.

The protein resides in the cytoplasm. In terms of biological role, increases the formation of ribosomal termination complexes and stimulates activities of RF-1 and RF-2. It binds guanine nucleotides and has strong preference for UGA stop codons. It may interact directly with the ribosome. The stimulation of RF-1 and RF-2 is significantly reduced by GTP and GDP, but not by GMP. The protein is Peptide chain release factor 3 of Shewanella sp. (strain W3-18-1).